A 299-amino-acid polypeptide reads, in one-letter code: Phosphate import ATP-binding protein PstB 1 (299 aa).

The tract at residues M1–K51 is disordered. The segment covering D10–P27 has biased composition (low complexity). Residues I54–I294 form the ABC transporter domain. Position 86–93 (G86–S93) interacts with ATP.

The protein belongs to the ABC transporter superfamily. Phosphate importer (TC 3.A.1.7) family. In terms of assembly, the complex is composed of two ATP-binding proteins (PstB), two transmembrane proteins (PstC and PstA) and a solute-binding protein (PstS).

It is found in the cell membrane. The catalysed reaction is phosphate(out) + ATP + H2O = ADP + 2 phosphate(in) + H(+). Functionally, part of the ABC transporter complex PstSACB involved in phosphate import. Responsible for energy coupling to the transport system. This is Phosphate import ATP-binding protein PstB 1 from Haloarcula marismortui (strain ATCC 43049 / DSM 3752 / JCM 8966 / VKM B-1809) (Halobacterium marismortui).